Consider the following 284-residue polypeptide: Bifunctional protein FolD (284 aa).

NADP(+) contacts are provided by residues 165–167 (GRS), S190, and I231.

The protein belongs to the tetrahydrofolate dehydrogenase/cyclohydrolase family. Homodimer.

It carries out the reaction (6R)-5,10-methylene-5,6,7,8-tetrahydrofolate + NADP(+) = (6R)-5,10-methenyltetrahydrofolate + NADPH. It catalyses the reaction (6R)-5,10-methenyltetrahydrofolate + H2O = (6R)-10-formyltetrahydrofolate + H(+). It functions in the pathway one-carbon metabolism; tetrahydrofolate interconversion. Catalyzes the oxidation of 5,10-methylenetetrahydrofolate to 5,10-methenyltetrahydrofolate and then the hydrolysis of 5,10-methenyltetrahydrofolate to 10-formyltetrahydrofolate. In Dechloromonas aromatica (strain RCB), this protein is Bifunctional protein FolD.